The following is a 344-amino-acid chain: Anthranilate phosphoribosyltransferase (344 aa).

Residues glycine 80, glycine 83–aspartate 84, threonine 88, asparagine 90–threonine 93, lysine 108–serine 116, and serine 120 each bind 5-phospho-alpha-D-ribose 1-diphosphate. Anthranilate is bound at residue glycine 80. Serine 92 provides a ligand contact to Mg(2+). Asparagine 111 provides a ligand contact to anthranilate. Arginine 166 contributes to the anthranilate binding site. Positions 225 and 226 each coordinate Mg(2+).

This sequence belongs to the anthranilate phosphoribosyltransferase family. As to quaternary structure, homodimer. The cofactor is Mg(2+).

The catalysed reaction is N-(5-phospho-beta-D-ribosyl)anthranilate + diphosphate = 5-phospho-alpha-D-ribose 1-diphosphate + anthranilate. It functions in the pathway amino-acid biosynthesis; L-tryptophan biosynthesis; L-tryptophan from chorismate: step 2/5. Its function is as follows. Catalyzes the transfer of the phosphoribosyl group of 5-phosphorylribose-1-pyrophosphate (PRPP) to anthranilate to yield N-(5'-phosphoribosyl)-anthranilate (PRA). The polypeptide is Anthranilate phosphoribosyltransferase (Legionella pneumophila (strain Corby)).